A 334-amino-acid chain; its full sequence is Heme A synthase (334 aa).

Helical transmembrane passes span 6–26 (ITRW…IGGI), 93–113 (GRIT…QGVI), 119–139 (LPYI…WYMV), 154–174 (LAFH…QLIK), and 189–209 (LIFS…GALV). Residue H253 participates in heme binding. 3 consecutive transmembrane segments (helical) span residues 255–275 (LGGF…FKVK), 282–302 (IAYF…ITIV), and 305–325 (VPII…SIII). Heme is bound at residue H313.

Belongs to the COX15/CtaA family. Type 2 subfamily. In terms of assembly, interacts with CtaB. It depends on heme b as a cofactor.

The protein resides in the cell membrane. It carries out the reaction Fe(II)-heme o + 2 A + H2O = Fe(II)-heme a + 2 AH2. It participates in porphyrin-containing compound metabolism; heme A biosynthesis; heme A from heme O: step 1/1. In terms of biological role, catalyzes the conversion of heme O to heme A by two successive hydroxylations of the methyl group at C8. The first hydroxylation forms heme I, the second hydroxylation results in an unstable dihydroxymethyl group, which spontaneously dehydrates, resulting in the formyl group of heme A. This Rickettsia prowazekii (strain Madrid E) protein is Heme A synthase.